The chain runs to 365 residues: Protein RecA (365 aa).

Position 76–83 (G76–T83) interacts with ATP. Positions D346 to A365 are disordered. The span at D353–A365 shows a compositional bias: acidic residues.

Belongs to the RecA family.

The protein resides in the cytoplasm. In terms of biological role, can catalyze the hydrolysis of ATP in the presence of single-stranded DNA, the ATP-dependent uptake of single-stranded DNA by duplex DNA, and the ATP-dependent hybridization of homologous single-stranded DNAs. It interacts with LexA causing its activation and leading to its autocatalytic cleavage. This Parvibaculum lavamentivorans (strain DS-1 / DSM 13023 / NCIMB 13966) protein is Protein RecA.